The primary structure comprises 261 residues: 1-(5-phosphoribosyl)-5-[(5-phosphoribosylamino)methylideneamino] imidazole-4-carboxamide isomerase (261 aa).

This sequence belongs to the HisA/HisF family.

The protein localises to the cytoplasm. It carries out the reaction 1-(5-phospho-beta-D-ribosyl)-5-[(5-phospho-beta-D-ribosylamino)methylideneamino]imidazole-4-carboxamide = 5-[(5-phospho-1-deoxy-D-ribulos-1-ylimino)methylamino]-1-(5-phospho-beta-D-ribosyl)imidazole-4-carboxamide. It functions in the pathway amino-acid biosynthesis; L-histidine biosynthesis; L-histidine from 5-phospho-alpha-D-ribose 1-diphosphate: step 4/9. Its function is as follows. Catalyzes the isomerization of the aminoaldose moiety of ProFAR to the aminoketose of PRFAR. This Saccharomyces cerevisiae (strain ATCC 204508 / S288c) (Baker's yeast) protein is 1-(5-phosphoribosyl)-5-[(5-phosphoribosylamino)methylideneamino] imidazole-4-carboxamide isomerase.